Consider the following 547-residue polypeptide: Inositol 1,4,5-trisphosphate receptor-interacting protein-like 1 (547 aa).

Positions 1–22 (MAVISLMFLAVMYVVHHPLMVS) are cleaved as a signal peptide. Residues 23–96 (DRMDLDTLAR…PFQAGGQDGG (74 aa)) are Extracellular-facing. Residues 28–66 (DTLARSRQLEKRMSEEMRQLEMEFEERSRAAEQKQKVEN) adopt a coiled-coil conformation. A helical membrane pass occupies residues 97–117 (PLGWILGNLWNAGLFCLFLIF). At 118–547 (ELLRQSMQHE…LPCSPVAGGL (430 aa)) the chain is on the cytoplasmic side.

It belongs to the ITPRIP family.

The protein resides in the cell membrane. Its function is as follows. Functions as a ligand of CD3E, inhibiting TCR-CD3 complex signaling to regulate T cell activation. Induces stable CD3E-NCK1 binding, thereby preventing the CD3E-ZAP70 interaction and subsequently inhibiting the activation of the downstream ERK-NFkB signaling cascade and calcium influx. The polypeptide is Inositol 1,4,5-trisphosphate receptor-interacting protein-like 1 (Itpripl1) (Mus musculus (Mouse)).